The primary structure comprises 617 residues: Dihydroxy-acid dehydratase (617 aa).

Asp82 contributes to the Mg(2+) binding site. Cys123 is a binding site for [2Fe-2S] cluster. Mg(2+) contacts are provided by Asp124 and Lys125. Lys125 carries the N6-carboxylysine modification. Residue Cys197 coordinates [2Fe-2S] cluster. Glu497 lines the Mg(2+) pocket. Residue Ser523 is the Proton acceptor of the active site.

The protein belongs to the IlvD/Edd family. In terms of assembly, homodimer. Requires [2Fe-2S] cluster as cofactor. The cofactor is Mg(2+).

It catalyses the reaction (2R)-2,3-dihydroxy-3-methylbutanoate = 3-methyl-2-oxobutanoate + H2O. The enzyme catalyses (2R,3R)-2,3-dihydroxy-3-methylpentanoate = (S)-3-methyl-2-oxopentanoate + H2O. It participates in amino-acid biosynthesis; L-isoleucine biosynthesis; L-isoleucine from 2-oxobutanoate: step 3/4. Its pathway is amino-acid biosynthesis; L-valine biosynthesis; L-valine from pyruvate: step 3/4. Its function is as follows. Functions in the biosynthesis of branched-chain amino acids. Catalyzes the dehydration of (2R,3R)-2,3-dihydroxy-3-methylpentanoate (2,3-dihydroxy-3-methylvalerate) into 2-oxo-3-methylpentanoate (2-oxo-3-methylvalerate) and of (2R)-2,3-dihydroxy-3-methylbutanoate (2,3-dihydroxyisovalerate) into 2-oxo-3-methylbutanoate (2-oxoisovalerate), the penultimate precursor to L-isoleucine and L-valine, respectively. This Streptomyces coelicolor (strain ATCC BAA-471 / A3(2) / M145) protein is Dihydroxy-acid dehydratase.